We begin with the raw amino-acid sequence, 325 residues long: Glutarate 2-hydroxylase (325 aa).

Positions 160, 162, and 292 each coordinate Fe cation.

It belongs to the glutarate hydroxylase family. As to quaternary structure, homotetramer. It depends on Fe(2+) as a cofactor.

It carries out the reaction glutarate + 2-oxoglutarate + O2 = (S)-2-hydroxyglutarate + succinate + CO2. Its pathway is amino-acid degradation. In terms of biological role, acts as an alpha-ketoglutarate-dependent dioxygenase catalyzing hydroxylation of glutarate (GA) to L-2-hydroxyglutarate (L2HG). Functions in a L-lysine degradation pathway that proceeds via cadaverine, glutarate and L-2-hydroxyglutarate. Is extremely specific for glutarate, but it can use both 2-oxoglutarate and 2-oxoadipate (2OA) as a cosubstrate for L2HG formation. This is Glutarate 2-hydroxylase from Pseudomonas putida (strain ATCC 47054 / DSM 6125 / CFBP 8728 / NCIMB 11950 / KT2440).